The primary structure comprises 162 residues: GTP-dependent dephospho-CoA kinase (162 aa).

The GTP site is built by Asp40, Val41, Val42, Asp59, Lys61, and Glu111.

Belongs to the GTP-dependent DPCK family.

It carries out the reaction 3'-dephospho-CoA + GTP = GDP + CoA + H(+). It functions in the pathway cofactor biosynthesis; coenzyme A biosynthesis. Functionally, catalyzes the GTP-dependent phosphorylation of the 3'-hydroxyl group of dephosphocoenzyme A to form coenzyme A (CoA). This Sulfurisphaera tokodaii (strain DSM 16993 / JCM 10545 / NBRC 100140 / 7) (Sulfolobus tokodaii) protein is GTP-dependent dephospho-CoA kinase.